The sequence spans 161 residues: UPF0178 protein Rsph17025_3122 (161 aa).

Belongs to the UPF0178 family.

The polypeptide is UPF0178 protein Rsph17025_3122 (Cereibacter sphaeroides (strain ATCC 17025 / ATH 2.4.3) (Rhodobacter sphaeroides)).